Reading from the N-terminus, the 180-residue chain is Negative modulator of initiation of replication (180 aa).

3 interaction with DNA regions span residues 86 to 87 (AV), 115 to 119 (RTRVY), and 149 to 155 (NTNTGRK).

Belongs to the SeqA family. As to quaternary structure, homodimer. Polymerizes to form helical filaments.

It is found in the cytoplasm. Functionally, negative regulator of replication initiation, which contributes to regulation of DNA replication and ensures that replication initiation occurs exactly once per chromosome per cell cycle. Binds to pairs of hemimethylated GATC sequences in the oriC region, thus preventing assembly of replication proteins and re-initiation at newly replicated origins. Repression is relieved when the region becomes fully methylated. This Enterobacter sp. (strain 638) protein is Negative modulator of initiation of replication.